The primary structure comprises 545 residues: Calcium-binding mitochondrial carrier SAL1 (545 aa).

One can recognise an EF-hand 1 domain in the interval 11–46 (QRDIRYACLFKELDVKGNGQVTLDNLISAFEKNDHP). Positions 65, 70, 93, 95, 97, 99, and 104 each coordinate Ca(2+). 3 consecutive EF-hand domains span residues 80–115 (NAES…LDNQ), 120–155 (NELN…RGQA), and 156–191 (SHKK…VPRK). Ca(2+) is bound by residues T161 and S166. Solcar repeat units lie at residues 225-332 (IRGF…TKKI), 345-434 (LSKF…LKKW), and 452-541 (LSNL…LKKF). A run of 6 helical transmembrane segments spans residues 231-248 (FIAG…TAPF), 307-326 (GNGL…FGSF), 355-368 (GLAG…VYPI), 409-428 (GVTV…LGTF), 458-475 (LPMG…VYPI), and 516-535 (GLVP…YLCY).

The protein belongs to the mitochondrial carrier (TC 2.A.29) family.

Its subcellular location is the mitochondrion inner membrane. Functionally, calcium-dependent mitochondrial solute carrier. The chain is Calcium-binding mitochondrial carrier SAL1 (SAL1) from Saccharomyces cerevisiae (Baker's yeast).